A 398-amino-acid chain; its full sequence is tRNA-specific 2-thiouridylase MnmA (398 aa).

ATP contacts are provided by residues Ala18–Ser25 and Leu44. Cys112 serves as the catalytic Nucleophile. Cys112 and Cys213 are joined by a disulfide. Gly136 is a binding site for ATP. Residues Arg163–Gln165 are interaction with tRNA. Cys213 acts as the Cysteine persulfide intermediate in catalysis.

Belongs to the MnmA/TRMU family.

It localises to the cytoplasm. The catalysed reaction is S-sulfanyl-L-cysteinyl-[protein] + uridine(34) in tRNA + AH2 + ATP = 2-thiouridine(34) in tRNA + L-cysteinyl-[protein] + A + AMP + diphosphate + H(+). In terms of biological role, catalyzes the 2-thiolation of uridine at the wobble position (U34) of tRNA, leading to the formation of s(2)U34. The chain is tRNA-specific 2-thiouridylase MnmA from Agrobacterium fabrum (strain C58 / ATCC 33970) (Agrobacterium tumefaciens (strain C58)).